The chain runs to 558 residues: Formate--tetrahydrofolate ligase (558 aa).

67–74 (TPAGEGKT) serves as a coordination point for ATP.

It belongs to the formate--tetrahydrofolate ligase family.

The enzyme catalyses (6S)-5,6,7,8-tetrahydrofolate + formate + ATP = (6R)-10-formyltetrahydrofolate + ADP + phosphate. It functions in the pathway one-carbon metabolism; tetrahydrofolate interconversion. The polypeptide is Formate--tetrahydrofolate ligase (Ruegeria pomeroyi (strain ATCC 700808 / DSM 15171 / DSS-3) (Silicibacter pomeroyi)).